Reading from the N-terminus, the 1196-residue chain is Phosphatidylinositol-3,5-bisphosphate 3-phosphatase MTMR3 (1196 aa).

Position 8 is a phosphoserine (serine 8). The Myotubularin phosphatase domain maps to 155–576; sequence EHVTSRFKNE…RNLMLWSAVY (422 aa). A 1,2-diacyl-sn-glycero-3-phospho-(1D-myo-inositol-3,5-bisphosphate) is bound by residues asparagine 326, asparagine 351, and isoleucine 352. Positions 326, 351, and 352 each coordinate a 1,2-diacyl-sn-glycero-3-phospho-(1D-myo-inositol-3-phosphate). Cysteine 413 (phosphocysteine intermediate) is an active-site residue. A 1,2-diacyl-sn-glycero-3-phospho-(1D-myo-inositol-3,5-bisphosphate) contacts are provided by serine 414, aspartate 415, glycine 416, tryptophan 417, aspartate 418, arginine 419, lysine 455, and arginine 459. A 1,2-diacyl-sn-glycero-3-phospho-(1D-myo-inositol-3-phosphate) contacts are provided by serine 414, aspartate 415, glycine 416, tryptophan 417, aspartate 418, and arginine 419. Arginine 459 lines the a 1,2-diacyl-sn-glycero-3-phospho-(1D-myo-inositol-3-phosphate) pocket. The disordered stretch occupies residues 587-612; it reads DDSCAPYPVPGTSPDEPPLSRLPKTR. Residues 593 to 603 show a composition bias toward pro residues; that stretch reads YPVPGTSPDEP. Residues serine 613, serine 633, serine 647, and serine 651 each carry the phosphoserine modification. Disordered regions lie at residues 697-719 and 855-900; these read TKEE…EVKE and ESGP…HRTS. The residue at position 907 (serine 907) is a Phosphoserine. Positions 993 to 1008 are enriched in polar residues; the sequence is NSHSGRPSTTSSPDQP. The segment at 993 to 1019 is disordered; it reads NSHSGRPSTTSSPDQPSRSHLDDDGMP. Residues 1027–1060 adopt a coiled-coil conformation; the sequence is QRLRQIESGHQQEVETLKKQVQELKSRLESQYLT. Serine 1062 bears the Phosphoserine mark. The FYVE-type zinc finger occupies 1117–1177; that stretch reads DHLAAHCYAC…VCKSCYSSLH (61 aa). Residues cysteine 1123, cysteine 1126, cysteine 1139, cysteine 1142, cysteine 1147, cysteine 1150, cysteine 1169, and cysteine 1172 each contribute to the Zn(2+) site.

This sequence belongs to the protein-tyrosine phosphatase family. Non-receptor class myotubularin subfamily. In terms of assembly, forms heterodimers with MTMR4 that recruit both CEP55 and PLK1; occurs during early mitosis, regulates the phosphorylation of CEP55 by PLK1 and its recruitment to the midbody where it mediates cell abscission.

It is found in the cytoplasm. It localises to the cytosol. The protein resides in the membrane. It catalyses the reaction a 1,2-diacyl-sn-glycero-3-phospho-(1D-myo-inositol-3,5-bisphosphate) + H2O = a 1,2-diacyl-sn-glycero-3-phospho-(1D-myo-inositol-5-phosphate) + phosphate. The catalysed reaction is a 1,2-diacyl-sn-glycero-3-phospho-(1D-myo-inositol-3-phosphate) + H2O = a 1,2-diacyl-sn-glycero-3-phospho-(1D-myo-inositol) + phosphate. The enzyme catalyses 1,2-dihexadecanoyl-sn-glycero-3-phospho-(1D-myo-inositol-3-phosphate) + H2O = 1,2-dihexadecanoyl-sn-glycero-3-phospho-(1D-myo-inositol) + phosphate. It carries out the reaction 1,2-dioctanoyl-sn-glycero-3-phospho-(1-D-myo-inositol-3-phosphate) + H2O = 1,2-dioctanoyl-sn-glycero-3-phospho-(1D-myo-inositol) + phosphate. It catalyses the reaction 1,2-dihexadecanoyl-sn-glycero-3-phospho-(1D-myo-inositol-3,5-phosphate) + H2O = 1,2-dihexadecanoyl-sn-glycero-3-phospho-(1D-myo-inositol-5-phosphate) + phosphate. Lipid phosphatase that specifically dephosphorylates the D-3 position of phosphatidylinositol 3-phosphate and phosphatidylinositol 3,5-bisphosphate, generating phosphatidylinositol and phosphatidylinositol 5-phosphate. Decreases the levels of phosphatidylinositol 3-phosphate, a phospholipid found in cell membranes where it acts as key regulator of both cell signaling and intracellular membrane traffic. Could also have a molecular sequestering/adapter activity and regulate biological processes independently of its phosphatase activity. It includes the regulation of midbody abscission during mitotic cytokinesis. In Mus musculus (Mouse), this protein is Phosphatidylinositol-3,5-bisphosphate 3-phosphatase MTMR3.